Consider the following 54-residue polypeptide: Photoreceptor disk component PRCD (54 aa).

C2 carries S-palmitoyl cysteine lipidation. Residues 24 to 54 (QPEPSGADGAVVGSRSERDLQSSGRKEEPLK) form a disordered region. Over residues 38-54 (RSERDLQSSGRKEEPLK) the composition is skewed to basic and acidic residues.

This sequence belongs to the PRCD family. Interacts with RHO/rhodopsin; the interaction promotes PRCD stability. Post-translationally, palmitoylated at Cys-2. Palmitoylation is essential for protein stability and trafficking to the photoreceptor outer segment, but does not appear to be essential for membrane localization. Probably palmitoylated by ZDHHC3. In terms of processing, phosphorylated. Expressed in retina.

The protein localises to the cell projection. Its subcellular location is the cilium. It localises to the photoreceptor outer segment. It is found in the membrane. The protein resides in the endoplasmic reticulum. The protein localises to the golgi apparatus. Its function is as follows. Involved in vision. This chain is Photoreceptor disk component PRCD, found in Canis lupus familiaris (Dog).